Consider the following 390-residue polypeptide: MPPSGLRLLPLLLPLLWLLVLTPGRPAAGLSTCKTIDMELVKRKRIEAIRGQILSKLRLASPPSQGEVPPGPLPEAVLALYNSTRDRVAGESAEPEPEPEADYYAKEVTRVLMVETTNRIYDKIKKSPHSIYMLFNTSELREAVPEPVLLSRAELRLLRLKLKVEQHVELYQKYSNNSWRYLSNRLLAPSDSPEWLSFDVTGVVRQWLSRGGEIEGFRLSAHCSCDSRDNTLQVDINGLSSSRRGDLATIHGMNRPFLLLMATPLERAQHLHTSRHRRALDTNYCFSSTEKNCCVRQLYIDFRKDLGWKWIHEPKGYHANFCLGPCPYIWSLDTQYSKVLALYNQHNPGASAAPCCVPQALEPLPIVYYVGRKPKVEQLSNMIVRSCKCS.

The signal sequence occupies residues 1 to 29 (MPPSGLRLLPLLLPLLWLLVLTPGRPAAG). A straightjacket domain region spans residues 30–74 (LSTCKTIDMELVKRKRIEAIRGQILSKLRLASPPSQGEVPPGPLP). The arm domain stretch occupies residues 75 to 271 (EAVLALYNST…ATPLERAQHL (197 aa)). 3 N-linked (GlcNAc...) asparagine glycosylation sites follow: Asn-82, Asn-136, and Asn-176. Residues 226 to 252 (DSRDNTLQVDINGLSSSRRGDLATIHG) are bowtie tail. A Cell attachment site motif is present at residues 244 to 246 (RGD). 4 disulfides stabilise this stretch: Cys-285/Cys-294, Cys-293/Cys-356, Cys-322/Cys-387, and Cys-326/Cys-389.

This sequence belongs to the TGF-beta family. As to quaternary structure, homodimer; disulfide-linked. Interacts with the serine proteases, HTRA1 and HTRA3: the interaction with either inhibits TGFB1-mediated signaling and the HTRA protease activity is required for this inhibition. May interact with THSD4; this interaction may lead to sequestration by FBN1 microfibril assembly and attenuation of TGFB signaling. Interacts with CD109, DPT and ASPN. Interacts with EFEMP2. Interacts with TSKU; the interaction contributes to regulation of the hair cycle. Interacts with TGFBR3. In terms of assembly, homodimer; disulfide-linked. Interacts with transforming growth factor beta-1 (TGF-beta-1) chain; interaction is non-covalent and maintains TGF-beta-1 in a latent state; each latency-associated peptide (LAP) monomer interacts with TGF-beta-1 in the other monomer. Interacts with LTBP1; leading to regulation of TGF-beta-1 activation. Interacts with LRRC32/GARP; leading to regulation of TGF-beta-1 activation on the surface of activated regulatory T-cells (Tregs). Interacts with LRRC33/NRROS; leading to regulation of TGF-beta-1 activation in macrophages and microglia. Interacts (via cell attachment site) with integrins ITGAV and ITGB6 (ITGAV:ITGB6), leading to release of the active TGF-beta-1. Interacts with NREP; the interaction results in a decrease in TGFB1 autoinduction. Interacts with HSP90AB1; inhibits latent TGFB1 activation. Homodimer; disulfide-linked. Interacts with TGF-beta receptors (TGFBR1 and TGFBR2), leading to signal transduction. In terms of processing, transforming growth factor beta-1 proprotein: The precursor proprotein is cleaved in the Golgi apparatus by FURIN to form Transforming growth factor beta-1 (TGF-beta-1) and Latency-associated peptide (LAP) chains, which remain non-covalently linked, rendering TGF-beta-1 inactive. Post-translationally, N-glycosylated. Deglycosylation leads to activation of Transforming growth factor beta-1 (TGF-beta-1); mechanisms triggering deglycosylation-driven activation of TGF-beta-1 are however unclear.

The protein localises to the secreted. The protein resides in the extracellular space. Its subcellular location is the extracellular matrix. In terms of biological role, transforming growth factor beta-1 proprotein: Precursor of the Latency-associated peptide (LAP) and Transforming growth factor beta-1 (TGF-beta-1) chains, which constitute the regulatory and active subunit of TGF-beta-1, respectively. Functionally, required to maintain the Transforming growth factor beta-1 (TGF-beta-1) chain in a latent state during storage in extracellular matrix. Associates non-covalently with TGF-beta-1 and regulates its activation via interaction with 'milieu molecules', such as LTBP1, LRRC32/GARP and LRRC33/NRROS, that control activation of TGF-beta-1. Interaction with LRRC33/NRROS regulates activation of TGF-beta-1 in macrophages and microglia. Interaction with LRRC32/GARP controls activation of TGF-beta-1 on the surface of activated regulatory T-cells (Tregs). Interaction with integrins (ITGAV:ITGB6 or ITGAV:ITGB8) results in distortion of the Latency-associated peptide chain and subsequent release of the active TGF-beta-1. Its function is as follows. Multifunctional protein that regulates the growth and differentiation of various cell types and is involved in various processes, such as normal development, immune function, microglia function and responses to neurodegeneration. Activation into mature form follows different steps: following cleavage of the proprotein in the Golgi apparatus, Latency-associated peptide (LAP) and Transforming growth factor beta-1 (TGF-beta-1) chains remain non-covalently linked rendering TGF-beta-1 inactive during storage in extracellular matrix. At the same time, LAP chain interacts with 'milieu molecules', such as LTBP1, LRRC32/GARP and LRRC33/NRROS that control activation of TGF-beta-1 and maintain it in a latent state during storage in extracellular milieus. TGF-beta-1 is released from LAP by integrins (ITGAV:ITGB6 or ITGAV:ITGB8): integrin-binding to LAP stabilizes an alternative conformation of the LAP bowtie tail and results in distortion of the LAP chain and subsequent release of the active TGF-beta-1. Once activated following release of LAP, TGF-beta-1 acts by binding to TGF-beta receptors (TGFBR1 and TGFBR2), which transduce signal. While expressed by many cells types, TGF-beta-1 only has a very localized range of action within cell environment thanks to fine regulation of its activation by Latency-associated peptide chain (LAP) and 'milieu molecules'. Plays an important role in bone remodeling: acts as a potent stimulator of osteoblastic bone formation, causing chemotaxis, proliferation and differentiation in committed osteoblasts. Can promote either T-helper 17 cells (Th17) or regulatory T-cells (Treg) lineage differentiation in a concentration-dependent manner. At high concentrations, leads to FOXP3-mediated suppression of RORC and down-regulation of IL-17 expression, favoring Treg cell development. At low concentrations in concert with IL-6 and IL-21, leads to expression of the IL-17 and IL-23 receptors, favoring differentiation to Th17 cells. Stimulates sustained production of collagen through the activation of CREB3L1 by regulated intramembrane proteolysis (RIP). Mediates SMAD2/3 activation by inducing its phosphorylation and subsequent translocation to the nucleus. Positively regulates odontoblastic differentiation in dental papilla cells, via promotion of IPO7-mediated translocation of phosphorylated SMAD2 to the nucleus and subsequent transcription of target genes. Can induce epithelial-to-mesenchymal transition (EMT) and cell migration in various cell types. The polypeptide is Transforming growth factor beta-1 proprotein (TGFB1) (Mustela putorius furo (European domestic ferret)).